The chain runs to 286 residues: 4-diphosphocytidyl-2-C-methyl-D-erythritol kinase (286 aa).

Residue Lys11 is part of the active site. 93-103 provides a ligand contact to ATP; that stretch reads PFGAGLGGGSS. Asp135 is an active-site residue.

It belongs to the GHMP kinase family. IspE subfamily.

The catalysed reaction is 4-CDP-2-C-methyl-D-erythritol + ATP = 4-CDP-2-C-methyl-D-erythritol 2-phosphate + ADP + H(+). The protein operates within isoprenoid biosynthesis; isopentenyl diphosphate biosynthesis via DXP pathway; isopentenyl diphosphate from 1-deoxy-D-xylulose 5-phosphate: step 3/6. Catalyzes the phosphorylation of the position 2 hydroxy group of 4-diphosphocytidyl-2C-methyl-D-erythritol. This Chlorobaculum parvum (strain DSM 263 / NCIMB 8327) (Chlorobium vibrioforme subsp. thiosulfatophilum) protein is 4-diphosphocytidyl-2-C-methyl-D-erythritol kinase.